Consider the following 324-residue polypeptide: Lactonase drp35 (324 aa).

Positions 47, 109, 111, 129, 132, 134, 137, 184, 235, and 236 each coordinate Ca(2+). Asp-235 serves as the catalytic Proton donor.

The protein belongs to the SMP-30/CGR1 family. Requires Ca(2+) as cofactor.

It localises to the cytoplasm. Functionally, exhibits lactonase activity. Acts in cells with perturbed membrane integrity and is possibly related to the membrane homeostasis. The protein is Lactonase drp35 (drp35) of Staphylococcus aureus (strain bovine RF122 / ET3-1).